The following is a 352-amino-acid chain: Lipoyl synthase (352 aa).

Positions 1-21 are disordered; it reads MTSVDTPTPHGGTPAPAPATA. Residues Cys71, Cys76, Cys82, Cys97, Cys101, Cys104, and Ser308 each contribute to the [4Fe-4S] cluster site. The Radical SAM core domain maps to 83-297; the sequence is WEDREATFLI…SRVAEEIGFA (215 aa).

This sequence belongs to the radical SAM superfamily. Lipoyl synthase family. The cofactor is [4Fe-4S] cluster.

It is found in the cytoplasm. It catalyses the reaction [[Fe-S] cluster scaffold protein carrying a second [4Fe-4S](2+) cluster] + N(6)-octanoyl-L-lysyl-[protein] + 2 oxidized [2Fe-2S]-[ferredoxin] + 2 S-adenosyl-L-methionine + 4 H(+) = [[Fe-S] cluster scaffold protein] + N(6)-[(R)-dihydrolipoyl]-L-lysyl-[protein] + 4 Fe(3+) + 2 hydrogen sulfide + 2 5'-deoxyadenosine + 2 L-methionine + 2 reduced [2Fe-2S]-[ferredoxin]. The protein operates within protein modification; protein lipoylation via endogenous pathway; protein N(6)-(lipoyl)lysine from octanoyl-[acyl-carrier-protein]: step 2/2. Its function is as follows. Catalyzes the radical-mediated insertion of two sulfur atoms into the C-6 and C-8 positions of the octanoyl moiety bound to the lipoyl domains of lipoate-dependent enzymes, thereby converting the octanoylated domains into lipoylated derivatives. In Nocardia farcinica (strain IFM 10152), this protein is Lipoyl synthase.